A 211-amino-acid polypeptide reads, in one-letter code: Urease accessory protein UreG (211 aa).

Position 8 to 15 (8 to 15 (GPVGSGKT)) interacts with GTP.

It belongs to the SIMIBI class G3E GTPase family. UreG subfamily. In terms of assembly, homodimer. UreD, UreF and UreG form a complex that acts as a GTP-hydrolysis-dependent molecular chaperone, activating the urease apoprotein by helping to assemble the nickel containing metallocenter of UreC. The UreE protein probably delivers the nickel.

The protein resides in the cytoplasm. Its function is as follows. Facilitates the functional incorporation of the urease nickel metallocenter. This process requires GTP hydrolysis, probably effectuated by UreG. The sequence is that of Urease accessory protein UreG from Metallosphaera sedula (strain ATCC 51363 / DSM 5348 / JCM 9185 / NBRC 15509 / TH2).